A 557-amino-acid polypeptide reads, in one-letter code: Potassium-transporting ATPase potassium-binding subunit (557 aa).

Transmembrane regions (helical) follow at residues 5-25 (GFLL…PLGS), 63-83 (LCAI…MLLG), 132-152 (GLTV…FALI), 170-190 (LLRI…LFFI), 253-273 (FVQM…FGEV), 283-303 (LLWA…WAEV), 329-349 (VLVS…AVIA), 356-376 (ALGG…FGGV), 379-399 (GLYG…LMIG), 416-436 (LTAL…ALAM), 484-504 (LLAL…MAIA), and 526-546 (LFVG…FIPA).

Belongs to the KdpA family. In terms of assembly, the system is composed of three essential subunits: KdpA, KdpB and KdpC.

It is found in the cell inner membrane. Part of the high-affinity ATP-driven potassium transport (or Kdp) system, which catalyzes the hydrolysis of ATP coupled with the electrogenic transport of potassium into the cytoplasm. This subunit binds the periplasmic potassium ions and delivers the ions to the membrane domain of KdpB through an intramembrane tunnel. The polypeptide is Potassium-transporting ATPase potassium-binding subunit (Escherichia coli O81 (strain ED1a)).